The chain runs to 195 residues: Orotate phosphoribosyltransferase (195 aa).

Residues Arg-86, Lys-90, His-92, and 111 to 119 (DDVATTGVS) each bind 5-phospho-alpha-D-ribose 1-diphosphate. Positions 115 and 143 each coordinate orotate.

The protein belongs to the purine/pyrimidine phosphoribosyltransferase family. PyrE subfamily. In terms of assembly, homodimer. It depends on Mg(2+) as a cofactor.

It carries out the reaction orotidine 5'-phosphate + diphosphate = orotate + 5-phospho-alpha-D-ribose 1-diphosphate. The protein operates within pyrimidine metabolism; UMP biosynthesis via de novo pathway; UMP from orotate: step 1/2. Functionally, catalyzes the transfer of a ribosyl phosphate group from 5-phosphoribose 1-diphosphate to orotate, leading to the formation of orotidine monophosphate (OMP). This chain is Orotate phosphoribosyltransferase, found in Saccharolobus solfataricus (strain ATCC 35092 / DSM 1617 / JCM 11322 / P2) (Sulfolobus solfataricus).